Reading from the N-terminus, the 85-residue chain is Large ribosomal subunit protein bL27 (85 aa).

The disordered stretch occupies residues 1–21; sequence MAHKKAGGSTRNGRDSESKRL.

Belongs to the bacterial ribosomal protein bL27 family.

In Photorhabdus laumondii subsp. laumondii (strain DSM 15139 / CIP 105565 / TT01) (Photorhabdus luminescens subsp. laumondii), this protein is Large ribosomal subunit protein bL27.